The sequence spans 147 residues: Hemoglobin subunit gamma (147 aa).

Residues 3–147 (HFTAEEKAVI…VAIALAHKYH (145 aa)) enclose the Globin domain. His64 and His93 together coordinate heme b.

Belongs to the globin family. In terms of assembly, heterotetramer of two alpha chains and two gamma chains in fetal hemoglobin (Hb F). Red blood cells.

Functionally, gamma chains make up the fetal hemoglobin F, in combination with alpha chains. The protein is Hemoglobin subunit gamma (HBG) of Eulemur fulvus fulvus (Brown lemur).